Here is a 421-residue protein sequence, read N- to C-terminus: Acyl-coenzyme A thioesterase 6 (421 aa).

Residues Ser232, Asp326, and His360 each act as charge relay system in the active site. The Peroxisome targeting signal motif lies at 419–421 (SKI).

The protein belongs to the C/M/P thioester hydrolase family.

It is found in the peroxisome. The protein localises to the cytoplasm. The enzyme catalyses pristanoyl-CoA + H2O = 2,6,10,14-tetramethylpentadecanoate + CoA + H(+). The catalysed reaction is phytanoyl-CoA + H2O = 3,7,11,15-tetramethylhexadecanoate + CoA + H(+). Its pathway is lipid metabolism; fatty acid metabolism. Catalyzes the hydrolysis of acyl-CoAs into free fatty acids and coenzyme A (CoASH), regulating their respective intracellular levels. Catalyzes the hydrolysis of phytanoyl-CoA and pristanoyl-CoA, two methyl-branched fatty acids derived from phytol, that enter the body via the diet. The protein is Acyl-coenzyme A thioesterase 6 of Homo sapiens (Human).